The chain runs to 429 residues: Formate-dependent phosphoribosylglycinamide formyltransferase (429 aa).

N(1)-(5-phospho-beta-D-ribosyl)glycinamide-binding positions include 26–27 and E86; that span reads EL. ATP is bound by residues R118, K159, 199-202, and E207; that span reads EEHI. Residues 123–319 form the ATP-grasp domain; the sequence is ETLVKEAKVP…EFGLHLRAVL (197 aa). Residues E276 and E288 each contribute to the Mg(2+) site. Residues D295, K375, and 382–383 contribute to the N(1)-(5-phospho-beta-D-ribosyl)glycinamide site; that span reads RR.

Belongs to the PurK/PurT family. Homodimer.

The catalysed reaction is N(1)-(5-phospho-beta-D-ribosyl)glycinamide + formate + ATP = N(2)-formyl-N(1)-(5-phospho-beta-D-ribosyl)glycinamide + ADP + phosphate + H(+). It participates in purine metabolism; IMP biosynthesis via de novo pathway; N(2)-formyl-N(1)-(5-phospho-D-ribosyl)glycinamide from N(1)-(5-phospho-D-ribosyl)glycinamide (formate route): step 1/1. Functionally, involved in the de novo purine biosynthesis. Catalyzes the transfer of formate to 5-phospho-ribosyl-glycinamide (GAR), producing 5-phospho-ribosyl-N-formylglycinamide (FGAR). Formate is provided by PurU via hydrolysis of 10-formyl-tetrahydrofolate. In Pyrococcus abyssi (strain GE5 / Orsay), this protein is Formate-dependent phosphoribosylglycinamide formyltransferase.